Here is a 582-residue protein sequence, read N- to C-terminus: ATP-dependent lipid A-core flippase (582 aa).

5 consecutive transmembrane segments (helical) span residues 16–36 (LWPM…ALIL), 63–83 (ILVW…VSGF), 153–173 (IIGL…ILVV), 253–273 (PLIQ…ASFP), and 275–295 (VMET…IALM). Residues 28-310 (IVAAIALILN…LTNVNAQFQR (283 aa)) enclose the ABC transmembrane type-1 domain. One can recognise an ABC transporter domain in the interval 342 to 578 (IAFDHVTFSY…QGVYAQLHQL (237 aa)). 376 to 383 (GRSGSGKS) contacts ATP.

It belongs to the ABC transporter superfamily. Lipid exporter (TC 3.A.1.106) family. Homodimer.

It is found in the cell inner membrane. The enzyme catalyses ATP + H2O + lipid A-core oligosaccharideSide 1 = ADP + phosphate + lipid A-core oligosaccharideSide 2.. Functionally, involved in lipopolysaccharide (LPS) biosynthesis. Translocates lipid A-core from the inner to the outer leaflet of the inner membrane. Transmembrane domains (TMD) form a pore in the inner membrane and the ATP-binding domain (NBD) is responsible for energy generation. This Sodalis glossinidius (strain morsitans) protein is ATP-dependent lipid A-core flippase.